A 159-amino-acid polypeptide reads, in one-letter code: MIDPDGFRPNVGIILTNDAGQVLWARRINQDAWQFPQGGINPQETPEDALYRELNEEVGLERHDVQILACTRGWLRYRLPQRLVRTHSQPLCIGQKQKWFLLRLISNEQRVRMDLTGKPEFDGWRWVSYWYPLGQVVTFKREVYRRALKELAPRLLSRD.

In terms of domain architecture, Nudix hydrolase spans 6-149 (GFRPNVGIIL…KREVYRRALK (144 aa)). The short motif at 38–59 (GGINPQETPEDALYRELNEEVG) is the Nudix box element.

The protein belongs to the Nudix hydrolase family. RppH subfamily. The cofactor is a divalent metal cation.

Functionally, accelerates the degradation of transcripts by removing pyrophosphate from the 5'-end of triphosphorylated RNA, leading to a more labile monophosphorylated state that can stimulate subsequent ribonuclease cleavage. The chain is RNA pyrophosphohydrolase from Pseudomonas savastanoi pv. phaseolicola (strain 1448A / Race 6) (Pseudomonas syringae pv. phaseolicola (strain 1448A / Race 6)).